Consider the following 255-residue polypeptide: Triosephosphate isomerase (255 aa).

Asn9–Lys11 is a binding site for substrate. Residue His96 is the Electrophile of the active site. Glu168 serves as the catalytic Proton acceptor. Substrate contacts are provided by Gly174 and Ser213.

It belongs to the triosephosphate isomerase family. In terms of assembly, homodimer.

Its subcellular location is the cytoplasm. It carries out the reaction D-glyceraldehyde 3-phosphate = dihydroxyacetone phosphate. The protein operates within carbohydrate biosynthesis; gluconeogenesis. It functions in the pathway carbohydrate degradation; glycolysis; D-glyceraldehyde 3-phosphate from glycerone phosphate: step 1/1. Involved in the gluconeogenesis. Catalyzes stereospecifically the conversion of dihydroxyacetone phosphate (DHAP) to D-glyceraldehyde-3-phosphate (G3P). In Buchnera aphidicola subsp. Acyrthosiphon pisum (strain APS) (Acyrthosiphon pisum symbiotic bacterium), this protein is Triosephosphate isomerase.